Consider the following 407-residue polypeptide: MQRVFIMVLDSFGIGAAEDADKFGDRGSDTLGHIAERCERGDANHGRKGPLKLPNLTRLGLAKAAEQSTGRFPAGLDKQAEIVGAYAYASEISSGKDTLSGHWEIAGVPVLFDWGYFPAVENSFPPKLLEALVARAGLPGFLGNCHASGTVILDRLGEEHMRTGKPIFYTSADSVFQLACHEETFGLERLYSLCEIAREILTDGGYNIGRVITRPFVGAKAGQFERTGNRHDLAVPPPSATMLQKLVEEKGGTVVSVGKIADIYAQVGISKKVKATGLDALFDATVREMDAAGENTLVFTNFVDFDSAYGHRRDVAGYAAALELFDRRLPELMSRVQGNDILILTADHGCDPTWHGTDHTREHVPVLIYGPTVNPGFYGHRTTFADIGQTVARYFGLSPMDYGKAIM.

Asp10, Asp306, His311, Asp347, His348, and His359 together coordinate Mn(2+).

It belongs to the phosphopentomutase family. Mn(2+) is required as a cofactor.

The protein localises to the cytoplasm. It carries out the reaction 2-deoxy-alpha-D-ribose 1-phosphate = 2-deoxy-D-ribose 5-phosphate. The catalysed reaction is alpha-D-ribose 1-phosphate = D-ribose 5-phosphate. Its pathway is carbohydrate degradation; 2-deoxy-D-ribose 1-phosphate degradation; D-glyceraldehyde 3-phosphate and acetaldehyde from 2-deoxy-alpha-D-ribose 1-phosphate: step 1/2. Isomerase that catalyzes the conversion of deoxy-ribose 1-phosphate (dRib-1-P) and ribose 1-phosphate (Rib-1-P) to deoxy-ribose 5-phosphate (dRib-5-P) and ribose 5-phosphate (Rib-5-P), respectively. The chain is Phosphopentomutase from Sodalis glossinidius (strain morsitans).